We begin with the raw amino-acid sequence, 413 residues long: Serine hydroxymethyltransferase (413 aa).

Residues Leu117 and 121–123 (GHL) contribute to the (6S)-5,6,7,8-tetrahydrofolate site. Lys226 carries the post-translational modification N6-(pyridoxal phosphate)lysine. (6S)-5,6,7,8-tetrahydrofolate contacts are provided by residues Glu239 and 349–351 (SPF).

Belongs to the SHMT family. In terms of assembly, homodimer. Pyridoxal 5'-phosphate serves as cofactor.

The protein resides in the cytoplasm. It catalyses the reaction (6R)-5,10-methylene-5,6,7,8-tetrahydrofolate + glycine + H2O = (6S)-5,6,7,8-tetrahydrofolate + L-serine. The protein operates within one-carbon metabolism; tetrahydrofolate interconversion. It participates in amino-acid biosynthesis; glycine biosynthesis; glycine from L-serine: step 1/1. Its function is as follows. Catalyzes the reversible interconversion of serine and glycine with tetrahydrofolate (THF) serving as the one-carbon carrier. This reaction serves as the major source of one-carbon groups required for the biosynthesis of purines, thymidylate, methionine, and other important biomolecules. Also exhibits THF-independent aldolase activity toward beta-hydroxyamino acids, producing glycine and aldehydes, via a retro-aldol mechanism. This chain is Serine hydroxymethyltransferase, found in Bacillus mycoides (strain KBAB4) (Bacillus weihenstephanensis).